We begin with the raw amino-acid sequence, 592 residues long: Aspartate--tRNA ligase (592 aa).

Position 171 (Glu-171) interacts with L-aspartate. Residues 195 to 198 (QLFK) form an aspartate region. Position 217 (Arg-217) interacts with L-aspartate. ATP is bound by residues 217-219 (RDE) and Gln-226. His-448 serves as a coordination point for L-aspartate. Glu-482 is a binding site for ATP. Arg-489 is an L-aspartate binding site. 534-537 (GLDR) is an ATP binding site.

This sequence belongs to the class-II aminoacyl-tRNA synthetase family. Type 1 subfamily. Homodimer.

It is found in the cytoplasm. It catalyses the reaction tRNA(Asp) + L-aspartate + ATP = L-aspartyl-tRNA(Asp) + AMP + diphosphate. Catalyzes the attachment of L-aspartate to tRNA(Asp) in a two-step reaction: L-aspartate is first activated by ATP to form Asp-AMP and then transferred to the acceptor end of tRNA(Asp). This is Aspartate--tRNA ligase from Vibrio vulnificus (strain CMCP6).